The chain runs to 65 residues: Large ribosomal subunit protein bL35 (65 aa).

The protein belongs to the bacterial ribosomal protein bL35 family.

The protein is Large ribosomal subunit protein bL35 of Neisseria meningitidis serogroup A / serotype 4A (strain DSM 15465 / Z2491).